The sequence spans 292 residues: Ribosomal protein L11 methyltransferase (292 aa).

4 residues coordinate S-adenosyl-L-methionine: Thr-136, Gly-159, Asp-181, and Asn-228.

It belongs to the methyltransferase superfamily. PrmA family.

The protein localises to the cytoplasm. It carries out the reaction L-lysyl-[protein] + 3 S-adenosyl-L-methionine = N(6),N(6),N(6)-trimethyl-L-lysyl-[protein] + 3 S-adenosyl-L-homocysteine + 3 H(+). Methylates ribosomal protein L11. The sequence is that of Ribosomal protein L11 methyltransferase from Rhizobium johnstonii (strain DSM 114642 / LMG 32736 / 3841) (Rhizobium leguminosarum bv. viciae).